The primary structure comprises 386 residues: Cytochrome b (386 aa).

4 consecutive transmembrane segments (helical) span residues 32–52 (FGSL…TLAM), 76–98 (WMIR…LHIG), 113–133 (PWSI…LGYV), and 179–199 (FFSL…MHLL). Heme b-binding residues include His82 and His96. Positions 183 and 197 each coordinate heme b. Residue His202 participates in a ubiquinone binding. The next 4 membrane-spanning stretches (helical) occupy residues 225–245 (YTFK…LFLF), 289–309 (LGGV…PLLD), 321–341 (LMKF…WCGS), and 348–368 (FITL…IIVP).

It belongs to the cytochrome b family. In terms of assembly, fungal cytochrome b-c1 complex contains 10 subunits; 3 respiratory subunits, 2 core proteins and 5 low-molecular weight proteins. Cytochrome b-c1 complex is a homodimer. Heme b serves as cofactor.

The protein resides in the mitochondrion inner membrane. Functionally, component of the ubiquinol-cytochrome c reductase complex (complex III or cytochrome b-c1 complex) that is part of the mitochondrial respiratory chain. The b-c1 complex mediates electron transfer from ubiquinol to cytochrome c. Contributes to the generation of a proton gradient across the mitochondrial membrane that is then used for ATP synthesis. The chain is Cytochrome b (cob) from Rhizopus oryzae (Mucormycosis agent).